The chain runs to 196 residues: Putative HTH-type transcriptional regulator in exeN 3'region (196 aa).

One can recognise an HTH luxR-type domain in the interval 120–185; sequence ASVGGDRLTR…ELFNLFLNHL (66 aa). A DNA-binding region (H-T-H motif) is located at residues 144–163; that stretch reads TEAIAAALGIGNGTVKNHRK.

This Aeromonas salmonicida protein is Putative HTH-type transcriptional regulator in exeN 3'region.